The chain runs to 443 residues: Dihydroorotase (443 aa).

The Zn(2+) site is built by H80 and H82. Substrate contacts are provided by residues 82-84 (HFR) and N114. 3 residues coordinate Zn(2+): D170, H197, and H251. N297 is a binding site for substrate. D324 contacts Zn(2+). D324 is a catalytic residue. Substrate contacts are provided by residues H328 and 342–343 (FG).

This sequence belongs to the metallo-dependent hydrolases superfamily. DHOase family. Class I DHOase subfamily. Requires Zn(2+) as cofactor.

It catalyses the reaction (S)-dihydroorotate + H2O = N-carbamoyl-L-aspartate + H(+). The protein operates within pyrimidine metabolism; UMP biosynthesis via de novo pathway; (S)-dihydroorotate from bicarbonate: step 3/3. In terms of biological role, catalyzes the reversible cyclization of carbamoyl aspartate to dihydroorotate. This Wolbachia sp. subsp. Brugia malayi (strain TRS) protein is Dihydroorotase.